The chain runs to 344 residues: MTDQAPVTYAGPPRVLSGVQPSGALHLGNYLGALVKFTRLQHEIDTFIFVADLHAITVWQDPAALAQQTREIAAAYIASGLDPDKATIFPQSAVREHAELSWIFNCVARLGWLDRMTQFKEKSGKHKERSSVGLYTYPVLQAADILIYKATHVPVGEDQKQHLELTRDIAQKFNHDFNAPGFFPLPDPLIQGPGARVMSLRDGSAKMSKSDPSDYSRINLTDTADDIAAKVKKARTDPEPLPETIEELATRAEADNLVGIFAALAGKTKAEVLADYAGKGFGTFKPALAELAVESLAPVGERMRGLLGDPAVLDAILAKGAEKAREAAAPTLAEVKKLVGFWGA.

ATP is bound by residues Gln20–Ser22 and Gly28–Asn29. Residues Pro21–Asn29 carry the 'HIGH' region motif. An L-tryptophan-binding site is contributed by Asp144. Residues Gly156–Asp158, Val197, and Lys206–Ser210 contribute to the ATP site. The 'KMSKS' region signature appears at Lys206–Ser210.

It belongs to the class-I aminoacyl-tRNA synthetase family. In terms of assembly, homodimer.

It is found in the cytoplasm. The enzyme catalyses tRNA(Trp) + L-tryptophan + ATP = L-tryptophyl-tRNA(Trp) + AMP + diphosphate + H(+). Catalyzes the attachment of tryptophan to tRNA(Trp). The chain is Tryptophan--tRNA ligase from Caulobacter vibrioides (strain ATCC 19089 / CIP 103742 / CB 15) (Caulobacter crescentus).